A 354-amino-acid chain; its full sequence is S-adenosylmethionine:tRNA ribosyltransferase-isomerase (354 aa).

This sequence belongs to the QueA family. As to quaternary structure, monomer.

The protein resides in the cytoplasm. The catalysed reaction is 7-aminomethyl-7-carbaguanosine(34) in tRNA + S-adenosyl-L-methionine = epoxyqueuosine(34) in tRNA + adenine + L-methionine + 2 H(+). Its pathway is tRNA modification; tRNA-queuosine biosynthesis. In terms of biological role, transfers and isomerizes the ribose moiety from AdoMet to the 7-aminomethyl group of 7-deazaguanine (preQ1-tRNA) to give epoxyqueuosine (oQ-tRNA). This chain is S-adenosylmethionine:tRNA ribosyltransferase-isomerase, found in Pseudomonas syringae pv. syringae (strain B728a).